We begin with the raw amino-acid sequence, 1261 residues long: SNF2 domain-containing protein CLASSY 2 (1261 aa).

The tract at residues 458 to 479 (FQKRTSRSSRSVAPKTEDSDEP) is disordered. The Helicase ATP-binding domain maps to 704-904 (DPTSGNIGGC…FNTLCLARPK (201 aa)). Residue 717-724 (HSPGAGKT) participates in ATP binding. Positions 855-858 (DEGH) match the DEAH box motif. The 166-residue stretch at 1067 to 1232 (FVLNLIFRVV…DPSLWQAEKI (166 aa)) folds into the Helicase C-terminal domain.

It belongs to the helicase family. As to quaternary structure, interacts with NRPD1 and SHH1.

The protein localises to the nucleus. Probable chromatin remodeling factor. The chain is SNF2 domain-containing protein CLASSY 2 (CLSY2) from Arabidopsis thaliana (Mouse-ear cress).